A 589-amino-acid chain; its full sequence is Malto-oligosyltrehalose trehalohydrolase (589 aa).

256–261 (GFDAVH) serves as a coordination point for substrate. Residue Asp-258 is the Nucleophile of the active site. Glu-295 (proton donor) is an active-site residue. Residues 320-324 (DDFHT) and 390-395 (HDQIGN) each bind substrate.

The protein belongs to the glycosyl hydrolase 13 family.

Its subcellular location is the cytoplasm. It carries out the reaction hydrolysis of (1-&gt;4)-alpha-D-glucosidic linkage in 4-alpha-D-[(1-&gt;4)-alpha-D-glucanosyl]n trehalose to yield trehalose and (1-&gt;4)-alpha-D-glucan.. It participates in glycan biosynthesis; trehalose biosynthesis. This chain is Malto-oligosyltrehalose trehalohydrolase (treZ), found in Brevibacterium helvolum.